The sequence spans 472 residues: Fumarate hydratase class II (472 aa).

The interval 1–20 (MSPHENPSVETRTESDTFGP) is disordered. Substrate contacts are provided by residues 105-107 (SGT), 136-139 (HPND), 146-148 (SSN), and Thr-194. Positions 127-149 (GKRGGKSPVHPNDHCNRGQSSND) are disordered. The active-site Proton donor/acceptor is His-195. Ser-325 is an active-site residue. Substrate contacts are provided by residues Ser-326 and 331–333 (KVN).

The protein belongs to the class-II fumarase/aspartase family. Fumarase subfamily. Homotetramer.

The protein resides in the cytoplasm. It carries out the reaction (S)-malate = fumarate + H2O. Its pathway is carbohydrate metabolism; tricarboxylic acid cycle; (S)-malate from fumarate: step 1/1. Functionally, involved in the TCA cycle. Catalyzes the stereospecific interconversion of fumarate to L-malate. The chain is Fumarate hydratase class II from Methylorubrum extorquens (strain ATCC 14718 / DSM 1338 / JCM 2805 / NCIMB 9133 / AM1) (Methylobacterium extorquens).